We begin with the raw amino-acid sequence, 92 residues long: DNA-directed RNA polymerase subunit omega (92 aa).

This sequence belongs to the RNA polymerase subunit omega family. In terms of assembly, the RNAP catalytic core consists of 2 alpha, 1 beta, 1 beta' and 1 omega subunit. When a sigma factor is associated with the core the holoenzyme is formed, which can initiate transcription.

It carries out the reaction RNA(n) + a ribonucleoside 5'-triphosphate = RNA(n+1) + diphosphate. Promotes RNA polymerase assembly. Latches the N- and C-terminal regions of the beta' subunit thereby facilitating its interaction with the beta and alpha subunits. In Shewanella baltica (strain OS223), this protein is DNA-directed RNA polymerase subunit omega.